We begin with the raw amino-acid sequence, 55 residues long: Variant surface glycoprotein ETAT 1.2 (55 aa).

Asn-34 is a glycosylation site (N-linked (GlcNAc...) asparagine). Residue Asn-38 is the site of GPI-anchor amidated asparagine attachment. Residues 39-55 (NSFAIKTSTLLLAVLLF) constitute a propeptide, removed in mature form.

Its subcellular location is the cell membrane. Functionally, VSG forms a coat on the surface of the parasite. The trypanosome evades the immune response of the host by expressing a series of antigenically distinct VSGs from an estimated 1000 VSG genes. This is Variant surface glycoprotein ETAT 1.2 from Trypanosoma brucei rhodesiense.